A 178-amino-acid chain; its full sequence is Large ribosomal subunit protein uL6 (178 aa).

It belongs to the universal ribosomal protein uL6 family. As to quaternary structure, part of the 50S ribosomal subunit.

Functionally, this protein binds to the 23S rRNA, and is important in its secondary structure. It is located near the subunit interface in the base of the L7/L12 stalk, and near the tRNA binding site of the peptidyltransferase center. The protein is Large ribosomal subunit protein uL6 of Desulfatibacillum aliphaticivorans.